The following is a 117-amino-acid chain: MPSKKDTTPKFHKLHVKTGDTVQVIAGKDKGKVGEVIKALPQLSKVIVKGVNIKTKHVKPQQEGESGRIVTQEAPIHSSNVMLYSTKQNVASRVCYTFTAEGKKVRKLKKTGEILDN.

This sequence belongs to the universal ribosomal protein uL24 family. As to quaternary structure, part of the 50S ribosomal subunit.

In terms of biological role, one of two assembly initiator proteins, it binds directly to the 5'-end of the 23S rRNA, where it nucleates assembly of the 50S subunit. One of the proteins that surrounds the polypeptide exit tunnel on the outside of the subunit. In Trichormus variabilis (strain ATCC 29413 / PCC 7937) (Anabaena variabilis), this protein is Large ribosomal subunit protein uL24.